The chain runs to 101 residues: Small ribosomal subunit protein uS14 (101 aa).

The protein belongs to the universal ribosomal protein uS14 family. As to quaternary structure, part of the 30S ribosomal subunit. Contacts proteins S3 and S10.

Its function is as follows. Binds 16S rRNA, required for the assembly of 30S particles and may also be responsible for determining the conformation of the 16S rRNA at the A site. The sequence is that of Small ribosomal subunit protein uS14 from Vesicomyosocius okutanii subsp. Calyptogena okutanii (strain HA).